Consider the following 96-residue polypeptide: Small ribosomal subunit protein bS16 (96 aa).

The protein belongs to the bacterial ribosomal protein bS16 family.

This is Small ribosomal subunit protein bS16 from Vesicomyosocius okutanii subsp. Calyptogena okutanii (strain HA).